We begin with the raw amino-acid sequence, 277 residues long: Phosphatidylglycerol--prolipoprotein diacylglyceryl transferase (277 aa).

The next 3 membrane-spanning stretches (helical) occupy residues 17-37 (LAIHWYGLSYLAAFGLFMLLG), 63-83 (ILFLGVAGVVLGGRLGYCLFY), and 101-121 (GGMAFHGGLLGVIVAMLWFAH). Arg146 is an a 1,2-diacyl-sn-glycero-3-phospho-(1'-sn-glycerol) binding site. Helical transmembrane passes span 182–202 (SQVYQFLLEGLLLFVLLWLYA), 209–229 (GQVAAAFLVGYGVLRFIAEQF), and 234–254 (AFLGILALGMSMGQWLCLPMI).

This sequence belongs to the Lgt family.

Its subcellular location is the cell inner membrane. The enzyme catalyses L-cysteinyl-[prolipoprotein] + a 1,2-diacyl-sn-glycero-3-phospho-(1'-sn-glycerol) = an S-1,2-diacyl-sn-glyceryl-L-cysteinyl-[prolipoprotein] + sn-glycerol 1-phosphate + H(+). It functions in the pathway protein modification; lipoprotein biosynthesis (diacylglyceryl transfer). In terms of biological role, catalyzes the transfer of the diacylglyceryl group from phosphatidylglycerol to the sulfhydryl group of the N-terminal cysteine of a prolipoprotein, the first step in the formation of mature lipoproteins. The chain is Phosphatidylglycerol--prolipoprotein diacylglyceryl transferase from Verminephrobacter eiseniae (strain EF01-2).